A 574-amino-acid chain; its full sequence is K(+)/H(+) antiporter NhaP2 (574 aa).

Helical transmembrane passes span 6 to 26, 34 to 54, 58 to 78, 87 to 107, 109 to 129, 173 to 193, 196 to 216, 219 to 239, 242 to 262, 271 to 291, 299 to 319, 335 to 355, and 359 to 379; these read INSF…LSPM, ILLI…GGIL, YSTA…DGGM, VALW…TSIT, VMAA…GAIV, IAIL…ISFI, FGLG…LVNV, LAEG…YATS, LGGS…NKPT, VLDG…GLLL, IWLP…PLAV, WFIS…VFPM, and LPGA…SLLV. In terms of domain architecture, RCK C-terminal spans 405–486; the sequence is SGVEIYPKSE…LEALSNLFSQ (82 aa).

This sequence belongs to the monovalent cation:proton antiporter 1 (CPA1) transporter (TC 2.A.36) family. NhaP2 subfamily.

The protein localises to the cell inner membrane. The enzyme catalyses K(+)(in) + H(+)(out) = K(+)(out) + H(+)(in). Functionally, k(+)/H(+) antiporter that extrudes potassium in exchange for external protons and maintains the internal concentration of potassium under toxic levels. The sequence is that of K(+)/H(+) antiporter NhaP2 from Shewanella oneidensis (strain ATCC 700550 / JCM 31522 / CIP 106686 / LMG 19005 / NCIMB 14063 / MR-1).